The following is a 393-amino-acid chain: S-adenosylmethionine synthase (393 aa).

Histidine 16 lines the ATP pocket. Aspartate 18 is a binding site for Mg(2+). K(+) is bound at residue glutamate 44. Positions 57 and 100 each coordinate L-methionine. A flexible loop region spans residues 100 to 110 (QSPDIVMGVDG). ATP-binding positions include 165–167 (DAK), 231–232 (RF), aspartate 240, 246–247 (RK), and lysine 267. Residue aspartate 240 coordinates L-methionine. Residue lysine 271 coordinates L-methionine.

The protein belongs to the AdoMet synthase family. Homotetramer; dimer of dimers. Mg(2+) serves as cofactor. The cofactor is K(+).

It is found in the cytoplasm. The enzyme catalyses L-methionine + ATP + H2O = S-adenosyl-L-methionine + phosphate + diphosphate. It participates in amino-acid biosynthesis; S-adenosyl-L-methionine biosynthesis; S-adenosyl-L-methionine from L-methionine: step 1/1. In terms of biological role, catalyzes the formation of S-adenosylmethionine (AdoMet) from methionine and ATP. The overall synthetic reaction is composed of two sequential steps, AdoMet formation and the subsequent tripolyphosphate hydrolysis which occurs prior to release of AdoMet from the enzyme. The sequence is that of S-adenosylmethionine synthase from Coxiella burnetii (strain CbuG_Q212) (Coxiella burnetii (strain Q212)).